Here is a 246-residue protein sequence, read N- to C-terminus: Bis(5'-nucleosyl)-tetraphosphatase PrpE [asymmetrical] (246 aa).

It belongs to the PrpE family. Requires Ni(2+) as cofactor.

The catalysed reaction is P(1),P(4)-bis(5'-guanosyl) tetraphosphate + H2O = GMP + GTP + 2 H(+). Asymmetrically hydrolyzes Ap4p to yield AMP and ATP. This Halalkalibacterium halodurans (strain ATCC BAA-125 / DSM 18197 / FERM 7344 / JCM 9153 / C-125) (Bacillus halodurans) protein is Bis(5'-nucleosyl)-tetraphosphatase PrpE [asymmetrical].